The sequence spans 114 residues: MFGAMLRYLIGISFFADSRFPWATLTINLLGSFLLAWLTSYVFKKVRLSPHLSTAIGTGFVGSFTTFSTLSVETISLFQDGHNFLAMVYVLVSLLGGLTMSHLGFKVSKEVQKS.

A run of 3 helical transmembrane segments spans residues 23–43 (ATLT…SYVF), 52–72 (LSTA…TLSV), and 84–104 (FLAM…SHLG). Na(+)-binding residues include Gly-62 and Thr-65.

Belongs to the fluoride channel Fluc/FEX (TC 1.A.43) family.

Its subcellular location is the cell membrane. The enzyme catalyses fluoride(in) = fluoride(out). Its activity is regulated as follows. Na(+) is not transported, but it plays an essential structural role and its presence is essential for fluoride channel function. Functionally, fluoride-specific ion channel. Important for reducing fluoride concentration in the cell, thus reducing its toxicity. The chain is Fluoride-specific ion channel FluC 1 from Desulfitobacterium hafniense (strain Y51).